The following is a 174-amino-acid chain: Crossover junction endodeoxyribonuclease RuvC (174 aa).

Active-site residues include Asp8, Glu67, and Asp139. Mg(2+)-binding residues include Asp8, Glu67, and Asp139.

Belongs to the RuvC family. In terms of assembly, homodimer which binds Holliday junction (HJ) DNA. The HJ becomes 2-fold symmetrical on binding to RuvC with unstacked arms; it has a different conformation from HJ DNA in complex with RuvA. In the full resolvosome a probable DNA-RuvA(4)-RuvB(12)-RuvC(2) complex forms which resolves the HJ. It depends on Mg(2+) as a cofactor.

The protein localises to the cytoplasm. The enzyme catalyses Endonucleolytic cleavage at a junction such as a reciprocal single-stranded crossover between two homologous DNA duplexes (Holliday junction).. Its function is as follows. The RuvA-RuvB-RuvC complex processes Holliday junction (HJ) DNA during genetic recombination and DNA repair. Endonuclease that resolves HJ intermediates. Cleaves cruciform DNA by making single-stranded nicks across the HJ at symmetrical positions within the homologous arms, yielding a 5'-phosphate and a 3'-hydroxyl group; requires a central core of homology in the junction. The consensus cleavage sequence is 5'-(A/T)TT(C/G)-3'. Cleavage occurs on the 3'-side of the TT dinucleotide at the point of strand exchange. HJ branch migration catalyzed by RuvA-RuvB allows RuvC to scan DNA until it finds its consensus sequence, where it cleaves and resolves the cruciform DNA. The polypeptide is Crossover junction endodeoxyribonuclease RuvC (Pseudomonas fluorescens (strain ATCC BAA-477 / NRRL B-23932 / Pf-5)).